Reading from the N-terminus, the 160-residue chain is MSRRRRVVRRAVATEGCSGNVLLARFVNVVMHQGKKALAEKIVFGALKMAESRLQGESGIAIFNTAVANVMPKMEVRSRRVGGVTYQIPVEVREDRSTSLALRWIVKAARASRKRTNKTYMSCLCHELMEAYNKRGGACKIKEEKYRMAEANKAFSHFRF.

It belongs to the universal ribosomal protein uS7 family. In terms of assembly, part of the 30S ribosomal subunit. Contacts proteins S9 and S11.

In terms of biological role, one of the primary rRNA binding proteins, it binds directly to 16S rRNA where it nucleates assembly of the head domain of the 30S subunit. Is located at the subunit interface close to the decoding center, probably blocks exit of the E-site tRNA. The sequence is that of Small ribosomal subunit protein uS7 from Anaplasma phagocytophilum (strain HZ).